A 33-amino-acid polypeptide reads, in one-letter code: Cytochrome b6-f complex subunit 8 (33 aa).

Residues 2 to 22 (LFTFAWASLAAIFTFSIAMVV) form a helical membrane-spanning segment.

This sequence belongs to the PetN family. As to quaternary structure, the 4 large subunits of the cytochrome b6-f complex are cytochrome b6, subunit IV (17 kDa polypeptide, PetD), cytochrome f and the Rieske protein, while the 4 small subunits are PetG, PetL, PetM and PetN. The complex functions as a dimer.

The protein localises to the cellular thylakoid membrane. Functionally, component of the cytochrome b6-f complex, which mediates electron transfer between photosystem II (PSII) and photosystem I (PSI), cyclic electron flow around PSI, and state transitions. This chain is Cytochrome b6-f complex subunit 8, found in Prochlorococcus marinus (strain SARG / CCMP1375 / SS120).